The chain runs to 158 residues: 2-C-methyl-D-erythritol 2,4-cyclodiphosphate synthase (158 aa).

Positions 9 and 11 each coordinate a divalent metal cation. 4-CDP-2-C-methyl-D-erythritol 2-phosphate contacts are provided by residues 9–11 and 35–36; these read DVH and HS. An a divalent metal cation-binding site is contributed by histidine 43. 4-CDP-2-C-methyl-D-erythritol 2-phosphate contacts are provided by residues 57–59, 62–66, 101–107, 133–136, phenylalanine 140, and arginine 143; these read DIG, FPDTD, AQKPKMA, and TTTE.

This sequence belongs to the IspF family. As to quaternary structure, homotrimer. Requires a divalent metal cation as cofactor.

The catalysed reaction is 4-CDP-2-C-methyl-D-erythritol 2-phosphate = 2-C-methyl-D-erythritol 2,4-cyclic diphosphate + CMP. The protein operates within isoprenoid biosynthesis; isopentenyl diphosphate biosynthesis via DXP pathway; isopentenyl diphosphate from 1-deoxy-D-xylulose 5-phosphate: step 4/6. Functionally, involved in the biosynthesis of isopentenyl diphosphate (IPP) and dimethylallyl diphosphate (DMAPP), two major building blocks of isoprenoid compounds. Catalyzes the conversion of 4-diphosphocytidyl-2-C-methyl-D-erythritol 2-phosphate (CDP-ME2P) to 2-C-methyl-D-erythritol 2,4-cyclodiphosphate (ME-CPP) with a corresponding release of cytidine 5-monophosphate (CMP). The chain is 2-C-methyl-D-erythritol 2,4-cyclodiphosphate synthase from Bacillus licheniformis (strain ATCC 14580 / DSM 13 / JCM 2505 / CCUG 7422 / NBRC 12200 / NCIMB 9375 / NCTC 10341 / NRRL NRS-1264 / Gibson 46).